Reading from the N-terminus, the 278-residue chain is Small ribosomal subunit protein uS3 (278 aa).

The 69-residue stretch at leucine 39–serine 107 folds into the KH type-2 domain. Positions alanine 255–glutamate 278 are disordered.

This sequence belongs to the universal ribosomal protein uS3 family. As to quaternary structure, part of the 30S ribosomal subunit. Forms a tight complex with proteins S10 and S14.

Functionally, binds the lower part of the 30S subunit head. Binds mRNA in the 70S ribosome, positioning it for translation. The sequence is that of Small ribosomal subunit protein uS3 from Dehalococcoides mccartyi (strain CBDB1).